The primary structure comprises 254 residues: Small ribosomal subunit protein uS2 (254 aa).

It belongs to the universal ribosomal protein uS2 family.

This chain is Small ribosomal subunit protein uS2, found in Oceanobacillus iheyensis (strain DSM 14371 / CIP 107618 / JCM 11309 / KCTC 3954 / HTE831).